A 310-amino-acid polypeptide reads, in one-letter code: Olfactory receptor 10N1 (310 aa).

Residues 1–23 are Extracellular-facing; the sequence is MDNYTLLNEFILLGIPQTQGLET. An N-linked (GlcNAc...) asparagine glycan is attached at Asn3. Residues 24–44 form a helical membrane-spanning segment; the sequence is LLFVVFLFIYFFTLLGNSLIF. The Cytoplasmic segment spans residues 45–55; sequence TAIISSSTLHT. Residues 56–76 form a helical membrane-spanning segment; the sequence is PMYFFLGLLSVFDMLFPSVTC. The Extracellular segment spans residues 77–95; the sequence is PKMLFYLSVRSPAISYKGC. A disulfide bridge connects residues Cys95 and Cys187. The chain crosses the membrane as a helical span at residues 96–116; that stretch reads AAQLFFYHLLGSTEGCLYSVM. Residues 117–136 are Cytoplasmic-facing; the sequence is AYDRYVAICHPLRYMLIMKP. The helical transmembrane segment at 137–157 threads the bilayer; it reads GVCVSLVIIAWLVGCLHATIL. At 158 to 202 the chain is on the extracellular side; that stretch reads TSLTFQLVYCASNQVDYFFCDLPAVLPLACTDSKLARKVGSINVG. A helical transmembrane segment spans residues 203–223; the sequence is FLALMLLFSVCVSYVHIGVAI. At 224-237 the chain is on the cytoplasmic side; that stretch reads LRIRSAEGRQKAFS. A helical membrane pass occupies residues 238–258; the sequence is TCSAHLTAILCAYGPVIIIYL. Over 259 to 264 the chain is Extracellular; the sequence is QRTPNP. The chain crosses the membrane as a helical span at residues 265–285; it reads LLGAVVQILNNIVSPMLNSLI. Topologically, residues 286–310 are cytoplasmic; it reads YSLRNKEVKRSLRRVFQNITFHGQK.

This sequence belongs to the G-protein coupled receptor 1 family.

It localises to the cell membrane. Functionally, odorant receptor. This Mus musculus (Mouse) protein is Olfactory receptor 10N1.